The chain runs to 240 residues: tRNA (guanine-N(1)-)-methyltransferase (240 aa).

S-adenosyl-L-methionine-binding positions include glycine 108 and leucine 127 to leucine 132.

The protein belongs to the RNA methyltransferase TrmD family. As to quaternary structure, homodimer.

The protein localises to the cytoplasm. It catalyses the reaction guanosine(37) in tRNA + S-adenosyl-L-methionine = N(1)-methylguanosine(37) in tRNA + S-adenosyl-L-homocysteine + H(+). Functionally, specifically methylates guanosine-37 in various tRNAs. The polypeptide is tRNA (guanine-N(1)-)-methyltransferase (Streptococcus mutans serotype c (strain ATCC 700610 / UA159)).